Reading from the N-terminus, the 422-residue chain is Serine--tRNA ligase (422 aa).

Positions 1–20 (MHDLKSIRDNPDGFDAGLKR) are disordered. Position 229–231 (229–231 (TAE)) interacts with L-serine. Residue 260–262 (RSE) participates in ATP binding. Glu283 lines the L-serine pocket. 347-350 (EISS) contributes to the ATP binding site. Ser383 lines the L-serine pocket.

The protein belongs to the class-II aminoacyl-tRNA synthetase family. Type-1 seryl-tRNA synthetase subfamily. Homodimer. The tRNA molecule binds across the dimer.

The protein localises to the cytoplasm. It carries out the reaction tRNA(Ser) + L-serine + ATP = L-seryl-tRNA(Ser) + AMP + diphosphate + H(+). It catalyses the reaction tRNA(Sec) + L-serine + ATP = L-seryl-tRNA(Sec) + AMP + diphosphate + H(+). It functions in the pathway aminoacyl-tRNA biosynthesis; selenocysteinyl-tRNA(Sec) biosynthesis; L-seryl-tRNA(Sec) from L-serine and tRNA(Sec): step 1/1. In terms of biological role, catalyzes the attachment of serine to tRNA(Ser). Is also able to aminoacylate tRNA(Sec) with serine, to form the misacylated tRNA L-seryl-tRNA(Sec), which will be further converted into selenocysteinyl-tRNA(Sec). The sequence is that of Serine--tRNA ligase from Paramagnetospirillum magneticum (strain ATCC 700264 / AMB-1) (Magnetospirillum magneticum).